A 149-amino-acid polypeptide reads, in one-letter code: Large-conductance mechanosensitive channel (149 aa).

2 consecutive transmembrane segments (helical) span residues 14–34 (VVDMAVGIIVGGAFGKLVNTL) and 85–105 (GLFINAMISFIIMAFAVYLLV).

It belongs to the MscL family. As to quaternary structure, homopentamer.

The protein localises to the cell inner membrane. Channel that opens in response to stretch forces in the membrane lipid bilayer. May participate in the regulation of osmotic pressure changes within the cell. The chain is Large-conductance mechanosensitive channel from Chlorobium phaeovibrioides (strain DSM 265 / 1930) (Prosthecochloris vibrioformis (strain DSM 265)).